The chain runs to 165 residues: MRLAAFVLVAVAFAIIPDGRVSAAALGPPESSEGTHEKARLLRLNAVPQPVETGNQEERTINFASIKKIVPGTSAFKNAQALKASQKAALKAQDAAKRKAAVDKWFKQFESDEFLFTAAFPSWVRKKMHPDKVREYFASLGKSGDDVSMIVKRYDNYRQTIPTKK.

A signal peptide spans Met-1 to Ala-23. The RxLR-dEER signature appears at Arg-40–Arg-59.

Belongs to the RxLR effector family.

The protein localises to the secreted. Its subcellular location is the host cell. Its function is as follows. Effector that is involved in host plant infection. Contributes to virulence during the early infection stage, by inhibiting plant defense responses induced by both PAMP-triggered immunity (PTI) and effector-triggered immunity (ETI). The polypeptide is RxLR effector protein CRE12 (Phytophthora infestans (strain T30-4) (Potato late blight agent)).